We begin with the raw amino-acid sequence, 105 residues long: NADH-quinone oxidoreductase subunit K (105 aa).

3 helical membrane-spanning segments follow: residues 8–28, 33–53, and 65–85; these read VTNG…GIII, ILIL…NFLI, and VFVF…LAIV.

Belongs to the complex I subunit 4L family. As to quaternary structure, NDH-1 is composed of 14 different subunits. Subunits NuoA, H, J, K, L, M, N constitute the membrane sector of the complex.

Its subcellular location is the cell inner membrane. It catalyses the reaction a quinone + NADH + 5 H(+)(in) = a quinol + NAD(+) + 4 H(+)(out). Its function is as follows. NDH-1 shuttles electrons from NADH, via FMN and iron-sulfur (Fe-S) centers, to quinones in the respiratory chain. The immediate electron acceptor for the enzyme in this species is believed to be ubiquinone. Couples the redox reaction to proton translocation (for every two electrons transferred, four hydrogen ions are translocated across the cytoplasmic membrane), and thus conserves the redox energy in a proton gradient. The polypeptide is NADH-quinone oxidoreductase subunit K (Francisella philomiragia subsp. philomiragia (strain ATCC 25017 / CCUG 19701 / FSC 153 / O#319-036)).